A 331-amino-acid chain; its full sequence is Biotin synthase (331 aa).

The Radical SAM core domain maps to 39–264 (SELQTCYLIS…VFPRSMVRLA (226 aa)). Residues cysteine 54, cysteine 58, and cysteine 61 each contribute to the [4Fe-4S] cluster site. 4 residues coordinate [2Fe-2S] cluster: cysteine 98, cysteine 130, cysteine 190, and arginine 262.

It belongs to the radical SAM superfamily. Biotin synthase family. In terms of assembly, homodimer. The cofactor is [4Fe-4S] cluster. It depends on [2Fe-2S] cluster as a cofactor.

The catalysed reaction is (4R,5S)-dethiobiotin + (sulfur carrier)-SH + 2 reduced [2Fe-2S]-[ferredoxin] + 2 S-adenosyl-L-methionine = (sulfur carrier)-H + biotin + 2 5'-deoxyadenosine + 2 L-methionine + 2 oxidized [2Fe-2S]-[ferredoxin]. Its pathway is cofactor biosynthesis; biotin biosynthesis; biotin from 7,8-diaminononanoate: step 2/2. In terms of biological role, catalyzes the conversion of dethiobiotin (DTB) to biotin by the insertion of a sulfur atom into dethiobiotin via a radical-based mechanism. The protein is Biotin synthase of Chlamydia pneumoniae (Chlamydophila pneumoniae).